We begin with the raw amino-acid sequence, 160 residues long: Serine-protein kinase RsbW (160 aa).

The protein belongs to the anti-sigma-factor family.

It carries out the reaction L-seryl-[protein] + ATP = O-phospho-L-seryl-[protein] + ADP + H(+). The catalysed reaction is L-threonyl-[protein] + ATP = O-phospho-L-threonyl-[protein] + ADP + H(+). Its function is as follows. Negative regulator of sigma-B activity. Phosphorylates and inactivates its specific antagonist protein, RsbV. Upon phosphorylation of RsbV, RsbW is released and binds to sigma-B, thereby blocking its ability to form an RNA polymerase holoenzyme (E-sigma-B). The sequence is that of Serine-protein kinase RsbW from Bacillus cereus (strain ZK / E33L).